The sequence spans 432 residues: Adenylosuccinate synthetase (432 aa).

Residues 12 to 18 and 40 to 42 contribute to the GTP site; these read GDEGKGK and GHT. The active-site Proton acceptor is D13. Mg(2+)-binding residues include D13 and G40. Residues 13-16, 38-41, T132, R146, Q226, T241, and R305 each bind IMP; these read DEGK and NAGH. H41 serves as the catalytic Proton donor. Residue 301 to 307 participates in substrate binding; that stretch reads TVTGRKR. Residues R307, 333–335, and 415–417 contribute to the GTP site; these read KLD and STS.

The protein belongs to the adenylosuccinate synthetase family. Homodimer. Mg(2+) serves as cofactor.

It is found in the cytoplasm. It carries out the reaction IMP + L-aspartate + GTP = N(6)-(1,2-dicarboxyethyl)-AMP + GDP + phosphate + 2 H(+). It functions in the pathway purine metabolism; AMP biosynthesis via de novo pathway; AMP from IMP: step 1/2. Functionally, plays an important role in the de novo pathway of purine nucleotide biosynthesis. Catalyzes the first committed step in the biosynthesis of AMP from IMP. The protein is Adenylosuccinate synthetase of Rhizobium etli (strain ATCC 51251 / DSM 11541 / JCM 21823 / NBRC 15573 / CFN 42).